Reading from the N-terminus, the 367-residue chain is Ribosomal RNA large subunit methyltransferase M (367 aa).

Residues S189, 222–225, D241, D261, and D278 contribute to the S-adenosyl-L-methionine site; that span reads CPGG. K307 functions as the Proton acceptor in the catalytic mechanism.

It belongs to the class I-like SAM-binding methyltransferase superfamily. RNA methyltransferase RlmE family. RlmM subfamily. Monomer.

It is found in the cytoplasm. The enzyme catalyses cytidine(2498) in 23S rRNA + S-adenosyl-L-methionine = 2'-O-methylcytidine(2498) in 23S rRNA + S-adenosyl-L-homocysteine + H(+). In terms of biological role, catalyzes the 2'-O-methylation at nucleotide C2498 in 23S rRNA. The sequence is that of Ribosomal RNA large subunit methyltransferase M from Shewanella denitrificans (strain OS217 / ATCC BAA-1090 / DSM 15013).